Reading from the N-terminus, the 774-residue chain is Transforming acidic coiled-coil-containing protein 1 (774 aa).

Position 2 is an N-acetylalanine (Ala-2). Residues 2–56 are interaction with LSM7 and SNRPG; that stretch reads AFSPWQILSPVQWAKWTWSAVRGSGAGEDEAGGPEGDPEEEEDSQAETKSLSFSS. Residues Ser-4, Ser-10, and Ser-45 each carry the phosphoserine modification. The interval 21-142 is disordered; it reads AVRGSGAGED…VKDVRGKAEH (122 aa). Residues 28 to 46 show a composition bias toward acidic residues; the sequence is GEDEAGGPEGDPEEEEDSQ. Residues 48–61 show a composition bias toward polar residues; the sequence is ETKSLSFSSDSEGN. Over residues 88–99 the composition is skewed to basic and acidic residues; it reads PEAKPQESREAD. Over residues 113–128 the composition is skewed to polar residues; it reads DTCSRSSENEAPQATV. Over residues 131–142 the composition is skewed to basic and acidic residues; sequence HPVKDVRGKAEH. Ser-148 and Ser-154 each carry phosphoserine. Residues 153–255 form an interaction with TDRD7 region; it reads FSIETRNCTD…PEMLMEGSPL (103 aa). The interaction with YEATS4 stretch occupies residues 207–424; it reads EAFTEASLKT…NNINTDDSGD (218 aa). The segment at 214–428 is disordered; sequence LKTGGPCPEP…TDDSGDPCKP (215 aa). 2 consecutive SPAZ domains span residues 216-294 and 354-504; these read TGGP…TAGV and SKPV…TDEE. At Ser-228 the chain carries Phosphoserine; by AURKC. Over residues 228-241 the composition is skewed to basic residues; sequence SKLRKPKPVSLRKK. 2 positions are modified to phosphoserine: Ser-376 and Ser-401. The segment covering 397-407 has biased composition (polar residues); that stretch reads ILQNSPPLSSK. Positions 452 to 468 match the Bipartite nuclear localization signal motif; the sequence is PKKAKSRLITSGCKVKK. Ser-480 and Ser-560 each carry phosphoserine. Residues 579–774 are a coiled coil; it reads IREEIITKEI…ELIAKLGKTD (196 aa). Positions 670 to 774 are interaction with CH-TOG; it reads VLEGFKKNEE…ELIAKLGKTD (105 aa).

It belongs to the TACC family. In terms of assembly, interacts with CH-TOG and YEATS4. Interacts with the AURKA and AURKB and AURKC. Interacts with LSM7, TDRD7 and SNRPG. Interacts with GCN5L2 and PCAF. Interacts with the thyroid hormone receptors THRB and THRA, predominantly with isoform alpha-2. The interaction with THRA isoform alpha-1 and THRB is decreased in the presence of thyroid hormone T3. Interacts with RARA in the nucleus. Also interacts with other nuclear receptors, including ESR1, NR3C1, PPARG and RXRA, preferentially in the absence of their hormonal ligands.

The protein resides in the cytoplasm. Its subcellular location is the nucleus. It is found in the cytoskeleton. It localises to the microtubule organizing center. The protein localises to the centrosome. The protein resides in the midbody. Functionally, involved in transcription regulation induced by nuclear receptors, including in T3 thyroid hormone and all-trans retinoic acid pathways. Might promote the nuclear localization of the receptors. Likely involved in the processes that promote cell division prior to the formation of differentiated tissues. This is Transforming acidic coiled-coil-containing protein 1 (Tacc1) from Mus musculus (Mouse).